A 514-amino-acid chain; its full sequence is Exoglucanase 1 (514 aa).

The first 17 residues, 1–17, serve as a signal peptide directing secretion; the sequence is MYRKLAVISAFLATARA. Q18 carries the post-translational modification Pyrrolidone carboxylic acid. A catalytic region spans residues 18-453; it reads QSACTLQSET…GSTGNPSGGN (436 aa). Disulfide bonds link C21–C89, C36–C42, C67–C88, C78–C84, C155–C414, C189–C227, C193–C226, C247–C273, C255–C260, and C278–C348. N62 is a glycosylation site (N-linked (GlcNAc) asparagine). The active-site Nucleophile is E229. The active-site Proton donor/acceptor is the E234. An N-linked (GlcNAc...) (high mannose) asparagine glycan is attached at N287. N401 carries N-linked (GlcNAc) asparagine glycosylation. Polar residues predominate over residues 401–437; sequence NETSSTPGAVRGSCSTSSGVPAQVESQSPNAKVTFSN. The interval 401–481 is disordered; it reads NETSSTPGAV…TGSSPGPTQS (81 aa). The segment at 454–478 is linker; that stretch reads PPGGNPPGTTTTRRPATTTGSSPGP. Low complexity predominate over residues 460-479; it reads PGTTTTRRPATTTGSSPGPT. O-linked (Man) threonine glycosylation is present at T462. 3 O-linked (Man...) threonine glycosylation sites follow: T463, T464, and T465. T470 carries an O-linked (Man) threonine glycan. 2 O-linked (Man...) threonine glycosylation sites follow: T471 and T472. O-linked (Man) serine glycans are attached at residues S474 and S475. A CBM1 domain is found at 478–514; the sequence is PTQSHYGQCGGIGYSGPTVCASGTTCQVLNPYYSQCL. O-linked (Man) threonine glycosylation is present at T479. 2 O-linked (Man) serine glycosylation sites follow: S481 and S492. 2 disulfide bridges follow: C486–C503 and C497–C513.

It belongs to the glycosyl hydrolase 7 (cellulase C) family. Post-translationally, N-glycosylated. A high mannose glycan is attached to Asn-287 (predominantly Man(8)GlcNAc(2)) and single GlcNAc occupancy is observed at Asn-62 and Asn-401 with some site heterogeneity depending on strains and fermentation conditions. O-glycosylated. Within the linker domain, all 8 threonines are variably glycosylated with between at least one, and up to three, mannose residues per site. All serines in this domain are at least partially glycosylated with a single mannose residue. O-glycosylation of the cellulase linker provides protection from proteolysis. Linker glycans also contribute to binding affinity of cellobiohydrolases to cellulose.

Its subcellular location is the secreted. It catalyses the reaction Hydrolysis of (1-&gt;4)-beta-D-glucosidic linkages in cellulose and cellotetraose, releasing cellobiose from the non-reducing ends of the chains.. In terms of biological role, exocellobiohydrolases (CBH) that catalyzes the hydrolysis of 1,4-beta-D-glucosidic bonds in cellulose to release the disaccharide cellobiose. The degradation of cellulose involves an interplay between different cellulolytic enzymes. Hydrolysis starts with endoglucanases (EGs), which cut internal beta-1,4-glucosidic bonds in cellulose to reduce the polymerization degree of the substrate and create new chain ends for exocellobiohydrolases (CBHs). The CBHs release the disaccharide cellobiose from the non-reducing end of the cellulose polymer chain. Finally, beta-1,4-glucosidases hydrolyze the cellobiose and other short cello-oligosaccharides into glucose units. The sequence is that of Exoglucanase 1 (cbh1) from Hypocrea jecorina (strain ATCC 56765 / BCRC 32924 / NRRL 11460 / Rut C-30) (Trichoderma reesei).